We begin with the raw amino-acid sequence, 105 residues long: Putative thioredoxin-5 (105 aa).

Positions 1–104 (MYKEPKNESE…VALENMVKKL (104 aa)) constitute a Thioredoxin domain. Active-site nucleophile residues include cysteine 30 and cysteine 33. A disulfide bridge links cysteine 30 with cysteine 33.

It belongs to the thioredoxin family.

Its function is as follows. Participates in various redox reactions through the reversible oxidation of its active center dithiol to a disulfide and catalyzes dithiol-disulfide exchange reactions. The polypeptide is Putative thioredoxin-5 (trxE) (Dictyostelium discoideum (Social amoeba)).